The chain runs to 159 residues: Ribosomal RNA large subunit methyltransferase H (159 aa).

Residues Leu76, Gly108, and 127–132 (FGLLTL) each bind S-adenosyl-L-methionine.

This sequence belongs to the RNA methyltransferase RlmH family. As to quaternary structure, homodimer.

The protein resides in the cytoplasm. The catalysed reaction is pseudouridine(1915) in 23S rRNA + S-adenosyl-L-methionine = N(3)-methylpseudouridine(1915) in 23S rRNA + S-adenosyl-L-homocysteine + H(+). Its function is as follows. Specifically methylates the pseudouridine at position 1915 (m3Psi1915) in 23S rRNA. In Streptococcus pyogenes serotype M6 (strain ATCC BAA-946 / MGAS10394), this protein is Ribosomal RNA large subunit methyltransferase H.